The primary structure comprises 415 residues: Serine hydroxymethyltransferase 1 (415 aa).

Residues L117 and 121-123 (GHL) contribute to the (6S)-5,6,7,8-tetrahydrofolate site. The residue at position 225 (K225) is an N6-(pyridoxal phosphate)lysine. 349 to 351 (SPF) is a (6S)-5,6,7,8-tetrahydrofolate binding site.

The protein belongs to the SHMT family. As to quaternary structure, homodimer. The cofactor is pyridoxal 5'-phosphate.

The protein localises to the cytoplasm. The catalysed reaction is (6R)-5,10-methylene-5,6,7,8-tetrahydrofolate + glycine + H2O = (6S)-5,6,7,8-tetrahydrofolate + L-serine. It participates in one-carbon metabolism; tetrahydrofolate interconversion. It functions in the pathway amino-acid biosynthesis; glycine biosynthesis; glycine from L-serine: step 1/1. Catalyzes the reversible interconversion of serine and glycine with tetrahydrofolate (THF) serving as the one-carbon carrier. This reaction serves as the major source of one-carbon groups required for the biosynthesis of purines, thymidylate, methionine, and other important biomolecules. Also exhibits THF-independent aldolase activity toward beta-hydroxyamino acids, producing glycine and aldehydes, via a retro-aldol mechanism. The protein is Serine hydroxymethyltransferase 1 of Sulfurimonas denitrificans (strain ATCC 33889 / DSM 1251) (Thiomicrospira denitrificans (strain ATCC 33889 / DSM 1251)).